We begin with the raw amino-acid sequence, 147 residues long: Hemoglobin subunit beta-1 (147 aa).

The Globin domain occupies 3–147 (KWSKTELTII…VVSALGKQYH (145 aa)). Residues H64 and H93 each contribute to the heme b site.

The protein belongs to the globin family. In terms of assembly, hb1 is a heterotetramer of two alpha chains and two beta-1 chains. In terms of tissue distribution, red blood cells.

Its function is as follows. Involved in oxygen transport from gills to the various peripheral tissues. The sequence is that of Hemoglobin subunit beta-1 (hbb1) from Cygnodraco mawsoni (Antarctic dragonfish).